Here is a 224-residue protein sequence, read N- to C-terminus: Phosphoribosylformylglycinamidine synthase subunit PurQ (224 aa).

The Glutamine amidotransferase type-1 domain maps to 2 to 224 (KFAVIQFPGS…SILNHAEVKA (223 aa)). C86 (nucleophile) is an active-site residue. Catalysis depends on residues H195 and E197.

In terms of assembly, part of the FGAM synthase complex composed of 1 PurL, 1 PurQ and 2 PurS subunits.

It localises to the cytoplasm. It carries out the reaction N(2)-formyl-N(1)-(5-phospho-beta-D-ribosyl)glycinamide + L-glutamine + ATP + H2O = 2-formamido-N(1)-(5-O-phospho-beta-D-ribosyl)acetamidine + L-glutamate + ADP + phosphate + H(+). The enzyme catalyses L-glutamine + H2O = L-glutamate + NH4(+). It participates in purine metabolism; IMP biosynthesis via de novo pathway; 5-amino-1-(5-phospho-D-ribosyl)imidazole from N(2)-formyl-N(1)-(5-phospho-D-ribosyl)glycinamide: step 1/2. In terms of biological role, part of the phosphoribosylformylglycinamidine synthase complex involved in the purines biosynthetic pathway. Catalyzes the ATP-dependent conversion of formylglycinamide ribonucleotide (FGAR) and glutamine to yield formylglycinamidine ribonucleotide (FGAM) and glutamate. The FGAM synthase complex is composed of three subunits. PurQ produces an ammonia molecule by converting glutamine to glutamate. PurL transfers the ammonia molecule to FGAR to form FGAM in an ATP-dependent manner. PurS interacts with PurQ and PurL and is thought to assist in the transfer of the ammonia molecule from PurQ to PurL. The polypeptide is Phosphoribosylformylglycinamidine synthase subunit PurQ (Lactobacillus delbrueckii subsp. bulgaricus (strain ATCC 11842 / DSM 20081 / BCRC 10696 / JCM 1002 / NBRC 13953 / NCIMB 11778 / NCTC 12712 / WDCM 00102 / Lb 14)).